Consider the following 139-residue polypeptide: Large ribosomal subunit protein uL16 (139 aa).

Residues 1 to 21 (MLSPRKTKFRKQHRGRMRGKA) show a composition bias toward basic residues. Residues 1 to 23 (MLSPRKTKFRKQHRGRMRGKATR) are disordered.

This sequence belongs to the universal ribosomal protein uL16 family. As to quaternary structure, part of the 50S ribosomal subunit.

Binds 23S rRNA and is also seen to make contacts with the A and possibly P site tRNAs. The chain is Large ribosomal subunit protein uL16 from Acaryochloris marina (strain MBIC 11017).